Reading from the N-terminus, the 217-residue chain is Flagellin B2 (217 aa).

A propeptide spanning residues 1–12 is cleaved from the precursor; sequence MKVFEFLKGKRG.

This sequence belongs to the archaeal flagellin family.

The protein resides in the archaeal flagellum. Functionally, flagellin is the subunit protein which polymerizes to form the filaments of archaeal flagella. This is Flagellin B2 (flaB2) from Methanocaldococcus jannaschii (strain ATCC 43067 / DSM 2661 / JAL-1 / JCM 10045 / NBRC 100440) (Methanococcus jannaschii).